We begin with the raw amino-acid sequence, 150 residues long: Large ribosomal subunit protein bL9 (150 aa).

It belongs to the bacterial ribosomal protein bL9 family.

Binds to the 23S rRNA. The chain is Large ribosomal subunit protein bL9 from Sodalis glossinidius (strain morsitans).